A 639-amino-acid chain; its full sequence is UvrABC system protein C (639 aa).

The GIY-YIG domain occupies 20–97; it reads ERSGVYRMFD…IKKFQPKFNI (78 aa). Residues 207 to 242 enclose the UVR domain; that stretch reads KELQENLSRKMEELSSQMRFEEAAEIRDRIKALSYV.

The protein belongs to the UvrC family. In terms of assembly, interacts with UvrB in an incision complex.

It is found in the cytoplasm. Its function is as follows. The UvrABC repair system catalyzes the recognition and processing of DNA lesions. UvrC both incises the 5' and 3' sides of the lesion. The N-terminal half is responsible for the 3' incision and the C-terminal half is responsible for the 5' incision. In Rickettsia africae (strain ESF-5), this protein is UvrABC system protein C.